The primary structure comprises 157 residues: 2-C-methyl-D-erythritol 2,4-cyclodiphosphate synthase (157 aa).

The a divalent metal cation site is built by Asp8 and His10. 4-CDP-2-C-methyl-D-erythritol 2-phosphate is bound by residues 8 to 10 and 34 to 35; these read DVH and HS. His42 contacts a divalent metal cation. Residues 56–58, 61–65, 100–106, 132–135, Phe139, and Arg142 contribute to the 4-CDP-2-C-methyl-D-erythritol 2-phosphate site; these read DIG, FPDTD, AQAPKML, and TTTE.

It belongs to the IspF family. Homotrimer. Requires a divalent metal cation as cofactor.

The enzyme catalyses 4-CDP-2-C-methyl-D-erythritol 2-phosphate = 2-C-methyl-D-erythritol 2,4-cyclic diphosphate + CMP. The protein operates within isoprenoid biosynthesis; isopentenyl diphosphate biosynthesis via DXP pathway; isopentenyl diphosphate from 1-deoxy-D-xylulose 5-phosphate: step 4/6. In terms of biological role, involved in the biosynthesis of isopentenyl diphosphate (IPP) and dimethylallyl diphosphate (DMAPP), two major building blocks of isoprenoid compounds. Catalyzes the conversion of 4-diphosphocytidyl-2-C-methyl-D-erythritol 2-phosphate (CDP-ME2P) to 2-C-methyl-D-erythritol 2,4-cyclodiphosphate (ME-CPP) with a corresponding release of cytidine 5-monophosphate (CMP). This is 2-C-methyl-D-erythritol 2,4-cyclodiphosphate synthase from Photorhabdus laumondii subsp. laumondii (strain DSM 15139 / CIP 105565 / TT01) (Photorhabdus luminescens subsp. laumondii).